Reading from the N-terminus, the 453-residue chain is Elongation factor 1-alpha (453 aa).

The 226-residue stretch at 5 to 230 folds into the tr-type G domain; that stretch reads KTHINIVVIG…DAIVEPKRPH (226 aa). The tract at residues 14–21 is G1; sequence GHVDAGKS. A GTP-binding site is contributed by 14–21; it reads GHVDAGKS. A G2 region spans residues 70–74; sequence GITID. The interval 91 to 94 is G3; that stretch reads DAPG. Residues 91 to 95 and 153 to 156 each bind GTP; these read DAPGH and NKMD. Positions 153–156 are G4; sequence NKMD. The interval 194 to 196 is G5; sequence SGW.

It belongs to the TRAFAC class translation factor GTPase superfamily. Classic translation factor GTPase family. EF-Tu/EF-1A subfamily. Binds to actin.

It localises to the cytoplasm. This protein promotes the GTP-dependent binding of aminoacyl-tRNA to the A-site of ribosomes during protein biosynthesis. It is also an abundant actin filament bundling protein. The sequence is that of Elongation factor 1-alpha (eef1a2) from Dictyostelium discoideum (Social amoeba).